A 182-amino-acid polypeptide reads, in one-letter code: Transcription termination/antitermination protein NusG (182 aa).

One can recognise a KOW domain in the interval 131-163 (VGEQVRIQSGPFANQIGEVQEIEADKFKLTVLV).

It belongs to the NusG family.

Participates in transcription elongation, termination and antitermination. This chain is Transcription termination/antitermination protein NusG, found in Staphylococcus epidermidis (strain ATCC 35984 / DSM 28319 / BCRC 17069 / CCUG 31568 / BM 3577 / RP62A).